Here is a 493-residue protein sequence, read N- to C-terminus: Desmethylyatein synthase (493 aa).

A helical membrane pass occupies residues 1–21; the sequence is METFQCLTLFLLFISTVFILK. A heme-binding site is contributed by Cys434.

It belongs to the cytochrome P450 family. Heme is required as a cofactor.

The protein resides in the membrane. The catalysed reaction is (-)-bursehernin + reduced [NADPH--hemoprotein reductase] + O2 = (-)-5'-demethylyatein + oxidized [NADPH--hemoprotein reductase] + H2O + H(+). Its pathway is aromatic compound metabolism; phenylpropanoid biosynthesis. Its function is as follows. Cytochrome P450 involved in the biosynthesis of etoposide, a chemotherapeutic compound of the topoisomerase inhibitor family. Catalyzes the conversion of bursehernin to demethylyatein. The polypeptide is Desmethylyatein synthase (Sinopodophyllum hexandrum (Himalayan may apple)).